Reading from the N-terminus, the 104-residue chain is Large ribosomal subunit protein uL24 (104 aa).

This sequence belongs to the universal ribosomal protein uL24 family. Part of the 50S ribosomal subunit.

Functionally, one of two assembly initiator proteins, it binds directly to the 5'-end of the 23S rRNA, where it nucleates assembly of the 50S subunit. Its function is as follows. One of the proteins that surrounds the polypeptide exit tunnel on the outside of the subunit. This chain is Large ribosomal subunit protein uL24, found in Dichelobacter nodosus (strain VCS1703A).